A 508-amino-acid chain; its full sequence is 2,3-bisphosphoglycerate-independent phosphoglycerate mutase (508 aa).

Mn(2+) contacts are provided by Asp-9 and Ser-59. The active-site Phosphoserine intermediate is the Ser-59. Substrate contacts are provided by residues His-120, 149–150 (RD), Arg-181, Arg-187, 254–257 (RADR), and Lys-331. Residues Asp-398, His-402, Asp-439, His-440, and His-456 each contribute to the Mn(2+) site.

Belongs to the BPG-independent phosphoglycerate mutase family. Mn(2+) serves as cofactor.

The enzyme catalyses (2R)-2-phosphoglycerate = (2R)-3-phosphoglycerate. It participates in carbohydrate degradation; glycolysis; pyruvate from D-glyceraldehyde 3-phosphate: step 3/5. Catalyzes the interconversion of 2-phosphoglycerate and 3-phosphoglycerate. This is 2,3-bisphosphoglycerate-independent phosphoglycerate mutase from Halobacterium salinarum (strain ATCC 700922 / JCM 11081 / NRC-1) (Halobacterium halobium).